Here is a 232-residue protein sequence, read N- to C-terminus: 7-cyano-7-deazaguanine synthase (232 aa).

Position 8–18 (8–18) interacts with ATP; it reads FSGGQDSTTCL. Zn(2+) contacts are provided by Cys189, Cys198, Cys201, and Cys204.

This sequence belongs to the QueC family. Zn(2+) serves as cofactor.

The catalysed reaction is 7-carboxy-7-deazaguanine + NH4(+) + ATP = 7-cyano-7-deazaguanine + ADP + phosphate + H2O + H(+). Its pathway is purine metabolism; 7-cyano-7-deazaguanine biosynthesis. Catalyzes the ATP-dependent conversion of 7-carboxy-7-deazaguanine (CDG) to 7-cyano-7-deazaguanine (preQ(0)). This chain is 7-cyano-7-deazaguanine synthase, found in Proteus mirabilis (strain HI4320).